Consider the following 227-residue polypeptide: 4'-phosphopantetheinyl transferase PptT (227 aa).

CoA-binding positions include Arg-48, Arg-56, 75 to 78, 92 to 93, and Asp-114; these read KGDK and TH. 3 residues coordinate Mg(2+): Asp-114, Ala-115, and Glu-116. Residues Glu-157, Lys-161, and Leu-171 each coordinate CoA.

It belongs to the P-Pant transferase superfamily. The cofactor is Mg(2+).

It carries out the reaction apo-[ACP] + CoA = holo-[ACP] + adenosine 3',5'-bisphosphate + H(+). With respect to regulation, inhibited by the amidino-urea compound 1-[(2,6-diethylphenyl)-3-N-ethylcarbamimodoyl]urea (compound 8918). It acts by binding to the phosphopantetheine pocket in the active site. Inhibition by compound 8918 kills M.tuberculosis. Functionally, transfers the 4'-phosphopantetheine moiety from coenzyme A to a Ser of acyl-carrier-protein. Involved in post-translational modification of various type-I polyketide synthases required for the formation of both mycolic acids and lipid virulence factors. Acts on Pks13, Mas, PpsA, PpsB, PpsC and PpsD. Also acts on AcpM, the meromycolate extension acyl carrier protein. In addition, is involved in the activation of the acyl carrier protein MbtL and the nonribosomal peptides synthases MbtB and MbtE, which are involved in the biosynthesis of the siderophore mycobactin. Required for the replication and survival of Mycobacterium during the acute and chronic phases of infection in mice. This Mycobacterium tuberculosis (strain ATCC 25618 / H37Rv) protein is 4'-phosphopantetheinyl transferase PptT.